A 380-amino-acid polypeptide reads, in one-letter code: M-protease (380 aa).

The first 27 residues, 1 to 27 (MKKPLGKIVASTALLISVAFSSSIASA), serve as a signal peptide directing secretion. The propeptide occupies 28–111 (AEEAKEKYLI…IEEDAEVTTM (84 aa)). Residues 34–111 (KYLIGFNEQE…IEEDAEVTTM (78 aa)) enclose the Inhibitor I9 domain. Gln-113 lines the Ca(2+) pocket. The Peptidase S8 domain maps to 116-379 (PWGISRVQAP…SGLVNAEAAT (264 aa)). Residue Asp-143 is the Charge relay system of the active site. Asp-151 provides a ligand contact to Ca(2+). Residue His-173 is the Charge relay system of the active site. Positions 184, 186, 188, 190, 274, 276, 279, and 302 each coordinate Ca(2+). Ser-326 (charge relay system) is an active-site residue.

The protein belongs to the peptidase S8 family. As to quaternary structure, monomer. The cofactor is Ca(2+).

Its subcellular location is the secreted. Its activity is regulated as follows. Activity is inhibited by phenylmethylsulfonyl fluoride and chymostatin. Functionally, alkaline serine protease that cleaves various substrates, including N-succinyl-Ala-Ala-Pro-Phe-pNA, N-succinyl-Ala-Ala-Pro-MetpNA, oxidized insulin B chain, casein, hemoglobin and scleroproteins, such as keratin, alpha-keratin and elastin. This chain is M-protease (aprE), found in Shouchella clausii (strain KSM-K16) (Alkalihalobacillus clausii).